Here is a 173-residue protein sequence, read N- to C-terminus: Translation initiation factor IF-3 (173 aa).

Belongs to the IF-3 family. Monomer.

The protein resides in the cytoplasm. Its function is as follows. IF-3 binds to the 30S ribosomal subunit and shifts the equilibrium between 70S ribosomes and their 50S and 30S subunits in favor of the free subunits, thus enhancing the availability of 30S subunits on which protein synthesis initiation begins. The chain is Translation initiation factor IF-3 from Parvibaculum lavamentivorans (strain DS-1 / DSM 13023 / NCIMB 13966).